Reading from the N-terminus, the 178-residue chain is Large ribosomal subunit protein eL20w (178 aa).

It belongs to the eukaryotic ribosomal protein eL20 family.

The polypeptide is Large ribosomal subunit protein eL20w (RPL18AD) (Arabidopsis thaliana (Mouse-ear cress)).